The sequence spans 284 residues: Bifunctional protein FolD (284 aa).

Residues 166–168 (GAS) and Ile232 each bind NADP(+).

The protein belongs to the tetrahydrofolate dehydrogenase/cyclohydrolase family. As to quaternary structure, homodimer.

The enzyme catalyses (6R)-5,10-methylene-5,6,7,8-tetrahydrofolate + NADP(+) = (6R)-5,10-methenyltetrahydrofolate + NADPH. It carries out the reaction (6R)-5,10-methenyltetrahydrofolate + H2O = (6R)-10-formyltetrahydrofolate + H(+). It functions in the pathway one-carbon metabolism; tetrahydrofolate interconversion. In terms of biological role, catalyzes the oxidation of 5,10-methylenetetrahydrofolate to 5,10-methenyltetrahydrofolate and then the hydrolysis of 5,10-methenyltetrahydrofolate to 10-formyltetrahydrofolate. This Tolumonas auensis (strain DSM 9187 / NBRC 110442 / TA 4) protein is Bifunctional protein FolD.